Here is a 129-residue protein sequence, read N- to C-terminus: Capsid protein (129 aa).

The tract at residues 31 to 104 (EWISSNSRSQ…FATNSDCELI (74 aa)) is viral RNA-binding.

The protein belongs to the Leviviricetes capsid protein family. In terms of assembly, homodimer. The capsid proteins form dimers that assemble by group of 5. Twelve such pentamers are linked together with free dimers. The homodimers binds to the viral RNA via an operator hairpin, but also to many other RNA sequences in the viral genome; this interaction probably shifts the virus from the replicative to the assembly phase and ensures specific encapsidation of the viral genome.

The protein localises to the virion. Its function is as follows. Capsid protein self-assembles to form an icosahedral capsid with a T=3 symmetry, about 26 nm in diameter, and consisting of 89 capsid proteins dimers (178 capsid proteins). Involved in viral genome encapsidation through the interaction between a capsid protein dimer and the multiple packaging signals present in the RNA genome. The capsid also contains 1 copy of the A2 maturation protein. Functionally, acts as a translational repressor of viral replicase synthesis late in infection. This latter function is the result of capsid protein interaction with an RNA hairpin which contains the replicase ribosome-binding site. In Enterobacteria phage f2 (Bacteriophage f2), this protein is Capsid protein.